We begin with the raw amino-acid sequence, 269 residues long: MKMNLMKMMMNNDNNNKLLNKVMMINNNNNNKLSNKVNTKQLNNNNQWSMMMYNYNKNNELNNIMNNNMMIQLLYKMMNMVNGNKMFISKPQFKININSVVIKFYYYNMNNNNNHNEINNMMMRLSKVLSYYYNKEVMIKPIKMSYVYMDSNIFTDYIMYLLTNNNNMNMDKIMNSYMNMFSNIMPLNINNQDKNVKYLSGWSIMLKGKLSDGRSKMTKMMYGSFNNNNKNYDLNNMPNNMYKGSVNPLNLNINKDGKYNIKVKLNYNK.

This sequence belongs to the universal ribosomal protein uS3 family.

Its subcellular location is the mitochondrion. Essential for mitochondrial protein synthesis and required for the maturation of small ribosomal subunits. The protein is Small ribosomal subunit protein uS3m (VAR1) of Monosporozyma servazzii (Yeast).